The chain runs to 289 residues: Pantothenate synthetase (289 aa).

33–40 contacts ATP; that stretch reads MGNLHDGH. His-40 functions as the Proton donor in the catalytic mechanism. Gln-64 serves as a coordination point for (R)-pantoate. Gln-64 serves as a coordination point for beta-alanine. 155–158 is a binding site for ATP; sequence GKKD. Gln-161 serves as a coordination point for (R)-pantoate. ATP-binding positions include Ala-184 and 192–195; that span reads LSSR.

The protein belongs to the pantothenate synthetase family. In terms of assembly, homodimer.

The protein localises to the cytoplasm. It carries out the reaction (R)-pantoate + beta-alanine + ATP = (R)-pantothenate + AMP + diphosphate + H(+). It participates in cofactor biosynthesis; (R)-pantothenate biosynthesis; (R)-pantothenate from (R)-pantoate and beta-alanine: step 1/1. In terms of biological role, catalyzes the condensation of pantoate with beta-alanine in an ATP-dependent reaction via a pantoyl-adenylate intermediate. This Acidovorax sp. (strain JS42) protein is Pantothenate synthetase.